The following is a 672-amino-acid chain: Acetoacetyl-CoA synthetase (672 aa).

This sequence belongs to the ATP-dependent AMP-binding enzyme family.

Its subcellular location is the cytoplasm. The protein localises to the cytosol. It catalyses the reaction acetoacetate + ATP + CoA = acetoacetyl-CoA + AMP + diphosphate. Functionally, converts acetoacetate to acetoacetyl-CoA in the cytosol. Ketone body-utilizing enzyme, responsible for the synthesis of cholesterol and fatty acids. The chain is Acetoacetyl-CoA synthetase (AACS) from Macaca fascicularis (Crab-eating macaque).